The following is a 444-amino-acid chain: Glutamyl-tRNA reductase (444 aa).

Substrate is bound by residues 49 to 52 (TCNR), serine 109, 114 to 116 (ETQ), and glutamine 120. Cysteine 50 acts as the Nucleophile in catalysis. NADP(+) is bound at residue 189 to 194 (GAGKMG).

It belongs to the glutamyl-tRNA reductase family. Homodimer.

The enzyme catalyses (S)-4-amino-5-oxopentanoate + tRNA(Glu) + NADP(+) = L-glutamyl-tRNA(Glu) + NADPH + H(+). It functions in the pathway porphyrin-containing compound metabolism; protoporphyrin-IX biosynthesis; 5-aminolevulinate from L-glutamyl-tRNA(Glu): step 1/2. In terms of biological role, catalyzes the NADPH-dependent reduction of glutamyl-tRNA(Glu) to glutamate 1-semialdehyde (GSA). This Bacillus cereus (strain AH187) protein is Glutamyl-tRNA reductase.